Consider the following 584-residue polypeptide: Probable terpene synthase 9 (584 aa).

Mg(2+)-binding residues include D339, D343, and E491. A DDXXD motif motif is present at residues 339 to 343 (DDMYD).

It belongs to the terpene synthase family. The cofactor is Mg(2+).

In terms of biological role, probable sesquiterpene synthase. The chain is Probable terpene synthase 9 (TPS9) from Ricinus communis (Castor bean).